The chain runs to 570 residues: Sulfite reductase [NADPH] hemoprotein beta-component (570 aa).

[4Fe-4S] cluster is bound by residues C434, C440, C479, and C483. Siroheme is bound at residue C483.

This sequence belongs to the nitrite and sulfite reductase 4Fe-4S domain family. In terms of assembly, alpha(8)-beta(8). The alpha component is a flavoprotein, the beta component is a hemoprotein. It depends on siroheme as a cofactor. The cofactor is [4Fe-4S] cluster.

The enzyme catalyses hydrogen sulfide + 3 NADP(+) + 3 H2O = sulfite + 3 NADPH + 4 H(+). It functions in the pathway sulfur metabolism; hydrogen sulfide biosynthesis; hydrogen sulfide from sulfite (NADPH route): step 1/1. Its function is as follows. Component of the sulfite reductase complex that catalyzes the 6-electron reduction of sulfite to sulfide. This is one of several activities required for the biosynthesis of L-cysteine from sulfate. This chain is Sulfite reductase [NADPH] hemoprotein beta-component, found in Zymomonas mobilis subsp. mobilis (strain ATCC 31821 / ZM4 / CP4).